A 356-amino-acid chain; its full sequence is Histidine biosynthesis bifunctional protein HisB (356 aa).

The tract at residues 1 to 166 is histidinol-phosphatase; it reads MSKKVLFIDR…AICNYLTSLN (166 aa). D9 (nucleophile) is an active-site residue. Mg(2+) contacts are provided by D9 and D11. Residue D11 is the Proton donor of the active site. Zn(2+) is bound by residues C93, H95, C101, and C103. Mg(2+) is bound at residue D130. Positions 167–356 are imidazoleglycerol-phosphate dehydratase; that stretch reads RYAHVKRITK…VLPSSKGVLS (190 aa).

This sequence in the N-terminal section; belongs to the histidinol-phosphatase family. It in the C-terminal section; belongs to the imidazoleglycerol-phosphate dehydratase family. It depends on Mg(2+) as a cofactor. Zn(2+) serves as cofactor.

The protein resides in the cytoplasm. It carries out the reaction D-erythro-1-(imidazol-4-yl)glycerol 3-phosphate = 3-(imidazol-4-yl)-2-oxopropyl phosphate + H2O. The catalysed reaction is L-histidinol phosphate + H2O = L-histidinol + phosphate. It participates in amino-acid biosynthesis; L-histidine biosynthesis; L-histidine from 5-phospho-alpha-D-ribose 1-diphosphate: step 6/9. The protein operates within amino-acid biosynthesis; L-histidine biosynthesis; L-histidine from 5-phospho-alpha-D-ribose 1-diphosphate: step 8/9. The protein is Histidine biosynthesis bifunctional protein HisB of Baumannia cicadellinicola subsp. Homalodisca coagulata.